Reading from the N-terminus, the 73-residue chain is Translation initiation factor IF-1 3 (73 aa).

An S1-like domain is found at 1–72 (MAKEELVEFG…TKGRINYRHK (72 aa)).

This sequence belongs to the IF-1 family. In terms of assembly, component of the 30S ribosomal translation pre-initiation complex which assembles on the 30S ribosome in the order IF-2 and IF-3, IF-1 and N-formylmethionyl-tRNA(fMet); mRNA recruitment can occur at any time during PIC assembly.

It localises to the cytoplasm. In terms of biological role, one of the essential components for the initiation of protein synthesis. Stabilizes the binding of IF-2 and IF-3 on the 30S subunit to which N-formylmethionyl-tRNA(fMet) subsequently binds. Helps modulate mRNA selection, yielding the 30S pre-initiation complex (PIC). Upon addition of the 50S ribosomal subunit IF-1, IF-2 and IF-3 are released leaving the mature 70S translation initiation complex. This is Translation initiation factor IF-1 3 from Cupriavidus metallidurans (strain ATCC 43123 / DSM 2839 / NBRC 102507 / CH34) (Ralstonia metallidurans).